The following is a 315-amino-acid chain: NADH-ubiquinone oxidoreductase chain 1 (315 aa).

A run of 8 helical transmembrane segments spans residues 6–26, 80–100, 107–127, 153–173, 177–197, 229–249, 253–273, and 292–312; these read FILS…SVAF, ISPI…PFFV, LGGL…MIAG, LALI…MYFF, IYIW…TISL, LIFM…CVIF, DVFN…FIWA, and CFLS…ILLF.

This sequence belongs to the complex I subunit 1 family.

It localises to the mitochondrion inner membrane. The catalysed reaction is a ubiquinone + NADH + 5 H(+)(in) = a ubiquinol + NAD(+) + 4 H(+)(out). Functionally, core subunit of the mitochondrial membrane respiratory chain NADH dehydrogenase (Complex I) that is believed to belong to the minimal assembly required for catalysis. Complex I functions in the transfer of electrons from NADH to the respiratory chain. The immediate electron acceptor for the enzyme is believed to be ubiquinone. This is NADH-ubiquinone oxidoreductase chain 1 (mt:ND1) from Drosophila persimilis (Fruit fly).